A 154-amino-acid polypeptide reads, in one-letter code: 6,7-dimethyl-8-ribityllumazine synthase (154 aa).

5-amino-6-(D-ribitylamino)uracil contacts are provided by residues F22, 56–58 (AFE), and 80–82 (TVI). 85 to 86 (AT) provides a ligand contact to (2S)-2-hydroxy-3-oxobutyl phosphate. H88 serves as the catalytic Proton donor. F113 contacts 5-amino-6-(D-ribitylamino)uracil. R127 lines the (2S)-2-hydroxy-3-oxobutyl phosphate pocket.

Belongs to the DMRL synthase family. In terms of assembly, forms an icosahedral capsid composed of 60 subunits, arranged as a dodecamer of pentamers.

The catalysed reaction is (2S)-2-hydroxy-3-oxobutyl phosphate + 5-amino-6-(D-ribitylamino)uracil = 6,7-dimethyl-8-(1-D-ribityl)lumazine + phosphate + 2 H2O + H(+). Its pathway is cofactor biosynthesis; riboflavin biosynthesis; riboflavin from 2-hydroxy-3-oxobutyl phosphate and 5-amino-6-(D-ribitylamino)uracil: step 1/2. In terms of biological role, catalyzes the formation of 6,7-dimethyl-8-ribityllumazine by condensation of 5-amino-6-(D-ribitylamino)uracil with 3,4-dihydroxy-2-butanone 4-phosphate. This is the penultimate step in the biosynthesis of riboflavin. The sequence is that of 6,7-dimethyl-8-ribityllumazine synthase from Bacillus amyloliquefaciens (Bacillus velezensis).